A 497-amino-acid polypeptide reads, in one-letter code: Vacuolar fusion protein CCZ1 homolog B (497 aa).

The interval 244 to 284 is disordered; the sequence is GTSSWSYLRKGSGSPQISSRSTTVPPLGSGGTLPSGNGSST.

This sequence belongs to the CCZ1 family. As to quaternary structure, interacts with MON1.

It is found in the endosome. It localises to the prevacuolar compartment. Functionally, plays an important role in membrane trafficking through the secretory apparatus. In complex with MON1, acts as a guanine exchange factor (GEF) for RABG3F of the RAB7 protein family. Promotes the exchange of GDP to GTP, converting RABG3F from an inactive GDP-bound form into an active GTP-bound form. The RABG3F active form is involved in protein trafficking from prevacuolar compartments (PVCs) to vacuoles. May serve as a linker between Rab5 and Rab7 protein families in PVCs and mediate PVC maturation. The chain is Vacuolar fusion protein CCZ1 homolog B from Arabidopsis thaliana (Mouse-ear cress).